The primary structure comprises 466 residues: 23S rRNA (uracil(1939)-C(5))-methyltransferase RlmD (466 aa).

Residues 1-22 (MSSQPNPTSHPEAASAASAASN) form a disordered region. The TRAM domain maps to 17–81 (ASAASNDPVV…PSYEQAHLVE (65 aa)). 4 residues coordinate [4Fe-4S] cluster: C94, C100, C103, and C182. 6 residues coordinate S-adenosyl-L-methionine: Q290, F319, N324, E340, N368, and D389. Residue C422 is the Nucleophile of the active site.

Belongs to the class I-like SAM-binding methyltransferase superfamily. RNA M5U methyltransferase family. RlmD subfamily.

The catalysed reaction is uridine(1939) in 23S rRNA + S-adenosyl-L-methionine = 5-methyluridine(1939) in 23S rRNA + S-adenosyl-L-homocysteine + H(+). Its function is as follows. Catalyzes the formation of 5-methyl-uridine at position 1939 (m5U1939) in 23S rRNA. The chain is 23S rRNA (uracil(1939)-C(5))-methyltransferase RlmD from Cupriavidus metallidurans (strain ATCC 43123 / DSM 2839 / NBRC 102507 / CH34) (Ralstonia metallidurans).